The sequence spans 347 residues: Protein RecA (347 aa).

67–74 is an ATP binding site; that stretch reads GPESSGKT.

The protein belongs to the RecA family. In terms of processing, the protein migrates as a 40 kDa protein in strains 69A and NCTC 11637. When overexpressed in E.coli a 38 kDa protein is made which is unable to complement the E.coli deletion mutant. It has been suggested this size difference is due to a post-translational modification.

It is found in the cytoplasm. Can catalyze the hydrolysis of ATP in the presence of single-stranded DNA, the ATP-dependent uptake of single-stranded DNA by duplex DNA, and the ATP-dependent hybridization of homologous single-stranded DNAs. It interacts with LexA causing its activation and leading to its autocatalytic cleavage. Its function is as follows. Deletion of this gene leads to the inability of the bacteria to perform homologous recombination, and markedly increases UV sensitivity. This is Protein RecA from Helicobacter pylori (strain ATCC 700392 / 26695) (Campylobacter pylori).